The following is an 845-amino-acid chain: Krueppel homolog 1 (845 aa).

The disordered stretch occupies residues 141–164; that stretch reads QKQQQQQQHESITNAAPTAAPSAQ. C2H2-type zinc fingers lie at residues 194–216, 271–293, 299–321, 327–349, 355–377, 383–407, 413–435, and 441–463; these read FKCD…TKSH, YQCN…YRTH, FECE…RRIH, YKCD…MRIH, HKCS…MRTH, YKCP…SRTH, YHCD…RVQH, and YKCT…IKGH. Disordered stretches follow at residues 469–610 and 757–845; these read DDEA…VQGQ and GLRS…AKAS. 3 stretches are compositionally biased toward low complexity: residues 474–491, 498–508, and 532–559; these read AAAA…SAGS, SSNSESSNHSP, and ATLS…SSMA. Positions 582–591 are enriched in polar residues; the sequence is SGVSSAQPAH. A compositionally biased stretch (low complexity) spans 759 to 775; that stretch reads RSSTESPERSSSPESDS. Basic and acidic residues predominate over residues 796–809; the sequence is NKGDDGQVDSEKAS. The segment covering 810-823 has biased composition (low complexity); sequence GDGTSAAGGAASVG.

It belongs to the krueppel C2H2-type zinc-finger protein family.

Functionally, plays a general role in the hierarchies of gene expression leading to metamorphosis. This chain is Krueppel homolog 1 (Kr-h1), found in Drosophila melanogaster (Fruit fly).